A 447-amino-acid polypeptide reads, in one-letter code: Cysteine--tRNA ligase (447 aa).

Residue Cys-28 participates in Zn(2+) binding. The short motif at 30 to 40 (PTVYNYIHIGN) is the 'HIGH' region element. Zn(2+) contacts are provided by Cys-211, His-236, and Glu-240. The 'KMSKS' region motif lies at 268-272 (KMSKS). Lys-271 lines the ATP pocket.

This sequence belongs to the class-I aminoacyl-tRNA synthetase family. Monomer. Requires Zn(2+) as cofactor.

It localises to the cytoplasm. It carries out the reaction tRNA(Cys) + L-cysteine + ATP = L-cysteinyl-tRNA(Cys) + AMP + diphosphate. The chain is Cysteine--tRNA ligase from Streptococcus agalactiae serotype III (strain NEM316).